Reading from the N-terminus, the 145-residue chain is MSEFVKPYNNDPFVGNLSTPVTTSTATKLYLGNLPIYRKGLSPLLRGLEIGMAHGYFLIGPFYILGPLRNSPNALLVGLFSAFGLILILTLGLTIYGLASFQGTEGGENLESAKGWRNFTSGFSIGAFGGASVAYVLLDNISFFA.

3 consecutive transmembrane segments (helical) span residues 48–68 (LEIGMAHGYFLIGPFYILGPL), 75–95 (LLVGLFSAFGLILILTLGLTI), and 125–145 (IGAFGGASVAYVLLDNISFFA).

This sequence belongs to the PsaL family.

It localises to the plastid. The protein resides in the chloroplast thylakoid membrane. The protein is Photosystem I reaction center subunit XI of Emiliania huxleyi (Coccolithophore).